A 153-amino-acid polypeptide reads, in one-letter code: MENYCKIVAQNRKAKFNYFIEDKMEAGIVLQGSELKSIRSGKVSIEDSYAAESSNEIFLYNSYIGEYKQANRFNHVPRRVRKLLLHRKEIQKIIGKLSVQGCTLVALSIYFNSKNKVKVELGLAKGKKQYDKRYAIKEQEWKKQQARIMRNKF.

Belongs to the SmpB family.

Its subcellular location is the cytoplasm. In terms of biological role, required for rescue of stalled ribosomes mediated by trans-translation. Binds to transfer-messenger RNA (tmRNA), required for stable association of tmRNA with ribosomes. tmRNA and SmpB together mimic tRNA shape, replacing the anticodon stem-loop with SmpB. tmRNA is encoded by the ssrA gene; the 2 termini fold to resemble tRNA(Ala) and it encodes a 'tag peptide', a short internal open reading frame. During trans-translation Ala-aminoacylated tmRNA acts like a tRNA, entering the A-site of stalled ribosomes, displacing the stalled mRNA. The ribosome then switches to translate the ORF on the tmRNA; the nascent peptide is terminated with the 'tag peptide' encoded by the tmRNA and targeted for degradation. The ribosome is freed to recommence translation, which seems to be the essential function of trans-translation. This is SsrA-binding protein from Orientia tsutsugamushi (strain Ikeda) (Rickettsia tsutsugamushi).